Here is an 89-residue protein sequence, read N- to C-terminus: Small ribosomal subunit protein uS15 (89 aa).

Belongs to the universal ribosomal protein uS15 family. Part of the 30S ribosomal subunit. Forms a bridge to the 50S subunit in the 70S ribosome, contacting the 23S rRNA.

Functionally, one of the primary rRNA binding proteins, it binds directly to 16S rRNA where it helps nucleate assembly of the platform of the 30S subunit by binding and bridging several RNA helices of the 16S rRNA. Forms an intersubunit bridge (bridge B4) with the 23S rRNA of the 50S subunit in the ribosome. The protein is Small ribosomal subunit protein uS15 of Bradyrhizobium sp. (strain ORS 278).